The primary structure comprises 521 residues: Glucose-1-phosphate adenylyltransferase small subunit, chloroplastic/amyloplastic (521 aa).

The segment at 1–32 is disordered; that stretch reads MAASIGALKSSPSSNNCINERRNDSTRAVSSR. The transit peptide at 1 to 72 directs the protein to the chloroplast; the sequence is MAASIGALKS…RSPMIVSPKA (72 aa). K268 is a substrate binding site. An allosteric regulation region spans residues 444–454; it reads TDADRKLLAAK.

It belongs to the bacterial/plant glucose-1-phosphate adenylyltransferase family. Heterotetramer. As to expression, leaves and tubers.

The protein localises to the plastid. The protein resides in the chloroplast. It is found in the amyloplast. The catalysed reaction is alpha-D-glucose 1-phosphate + ATP + H(+) = ADP-alpha-D-glucose + diphosphate. It functions in the pathway glycan biosynthesis; starch biosynthesis. Its activity is regulated as follows. Activated by 3'phosphoglycerate, inhibited by orthophosphate. Allosteric regulation. In terms of biological role, this protein plays a role in synthesis of starch. It catalyzes the synthesis of the activated glycosyl donor, ADP-glucose from Glc-1-P and ATP. The protein is Glucose-1-phosphate adenylyltransferase small subunit, chloroplastic/amyloplastic of Solanum tuberosum (Potato).